The primary structure comprises 193 residues: Acyl carrier protein phosphodiesterase (193 aa).

The protein belongs to the AcpH family.

The catalysed reaction is holo-[ACP] + H2O = apo-[ACP] + (R)-4'-phosphopantetheine + H(+). In terms of biological role, converts holo-ACP to apo-ACP by hydrolytic cleavage of the phosphopantetheine prosthetic group from ACP. The protein is Acyl carrier protein phosphodiesterase of Salmonella agona (strain SL483).